The following is a 334-amino-acid chain: N-acetyl-gamma-glutamyl-phosphate reductase (334 aa).

The active site involves cysteine 154.

It belongs to the NAGSA dehydrogenase family. Type 1 subfamily.

The protein localises to the cytoplasm. It carries out the reaction N-acetyl-L-glutamate 5-semialdehyde + phosphate + NADP(+) = N-acetyl-L-glutamyl 5-phosphate + NADPH + H(+). It functions in the pathway amino-acid biosynthesis; L-arginine biosynthesis; N(2)-acetyl-L-ornithine from L-glutamate: step 3/4. In terms of biological role, catalyzes the NADPH-dependent reduction of N-acetyl-5-glutamyl phosphate to yield N-acetyl-L-glutamate 5-semialdehyde. This Escherichia coli O157:H7 protein is N-acetyl-gamma-glutamyl-phosphate reductase.